The following is a 238-amino-acid chain: Insulin-like growth factor-binding protein 6 (238 aa).

The signal sequence occupies residues 1–25 (MTWDGLPTQPLLMLLMLLFAAGSGS). Positions 26–108 (ALAGCPGCGA…LIGQGRCQRA (83 aa)) constitute an IGFBP N-terminal domain. 5 cysteine pairs are disulfide-bonded: C30/C33, C41/C45, C58/C64, C72/C85, and C79/C105. The interval 104–159 (RCQRARGPSEETTKESKPQGGASRSRDTNHRDRQKNPRTSAAPIRPNPVQDSEMGP) is disordered. 2 stretches are compositionally biased toward basic and acidic residues: residues 110–120 (GPSEETTKESK) and 127–138 (RSRDTNHRDRQK). One can recognise a Thyroglobulin type-1 domain in the interval 157-232 (MGPCRRHLDS…SPDGQGSTQC (76 aa)). Disulfide bonds link C160-C188, C199-C210, and C212-C232. A disordered region spans residues 218–238 (QPLPVSPDGQGSTQCSARSSG). The segment covering 226–238 (GQGSTQCSARSSG) has biased composition (polar residues).

In terms of assembly, interacts (via C-terminal domain) with PHB2. In terms of processing, O-glycosylated.

The protein resides in the secreted. Its function is as follows. IGF-binding proteins prolong the half-life of the IGFs and have been shown to either inhibit or stimulate the growth promoting effects of the IGFs on cell culture. They alter the interaction of IGFs with their cell surface receptors. Activates the MAPK signaling pathway and induces cell migration. In Mus musculus (Mouse), this protein is Insulin-like growth factor-binding protein 6 (Igfbp6).